The following is a 1040-amino-acid chain: Multidrug resistance protein MdtB (1040 aa).

12 helical membrane passes run Phe-16 to Ile-36, Leu-347 to Ala-367, Ile-369 to Leu-389, Leu-396 to Ile-416, Ile-440 to Phe-460, Phe-472 to Pro-492, Trp-537 to Ile-557, Leu-863 to Ile-883, Phe-888 to Ala-908, Ile-911 to Val-931, Ile-968 to Val-988, and Ile-998 to Ile-1018.

This sequence belongs to the resistance-nodulation-cell division (RND) (TC 2.A.6) family. MdtB subfamily. Part of a tripartite efflux system composed of MdtA, MdtB and MdtC. MdtB forms a heteromultimer with MdtC.

The protein localises to the cell inner membrane. Its function is as follows. The MdtABC tripartite complex confers resistance against novobiocin and deoxycholate. This is Multidrug resistance protein MdtB from Escherichia coli O45:K1 (strain S88 / ExPEC).